A 143-amino-acid polypeptide reads, in one-letter code: METNFSFDSNLIVIIIITLFATRIIAKRFLSTPKMVSQETVAHVKDLIGQKEVFVAAKTYCPYCKATLSTLFQELNVPKSKALVLELDEMSNGSEIQDALEEISGQKTVPNVYINGKHIGGNSDLETLKKNGKLAEILKPVFQ.

The transit peptide at 1–30 (METNFSFDSNLIVIIIITLFATRIIAKRFL) directs the protein to the mitochondrion. S37 carries the phosphoserine modification. Residues 41–143 (VAHVKDLIGQ…LAEILKPVFQ (103 aa)) enclose the Glutaredoxin domain. 58 to 63 (KTYCPY) is a glutathione binding site. C61 bears the S-glutathionyl cysteine; alternate mark. C61 and C64 are joined by a disulfide. S91 carries the post-translational modification Phosphoserine. Glutathione is bound by residues V109 and 122-123 (NS).

It belongs to the glutaredoxin family.

Its subcellular location is the cytoplasm. The protein localises to the mitochondrion. It carries out the reaction 2 glutathione + H2O2 = glutathione disulfide + 2 H2O. The catalysed reaction is 1-chloro-2,4-dinitrobenzene + glutathione = 2,4-dinitrophenyl-S-glutathione + chloride + H(+). It catalyses the reaction RX + glutathione = an S-substituted glutathione + a halide anion + H(+). Its function is as follows. Component of the glutathione system which performs several activities such as glutathione-dependent oxidoreductase, glutathione peroxidase and glutathione S-transferase (GST) activity. The disulfide bond functions as an electron carrier in the glutathione-dependent synthesis of deoxyribonucleotides by the enzyme ribonucleotide reductase. In addition, it is also involved in reducing cytosolic protein- and non-protein-disulfides in a coupled system with glutathione reductase. Required for resistance to reactive oxygen species (ROS) by directly reducing hydroperoxides and for the detoxification of ROS-mediated damage. GRX2 is more active as an oxidoreductase than GRX1. Responsible for the S-glutathionylation of DHBP synthase. The protein is Glutaredoxin-2 (GRX2) of Saccharomyces cerevisiae (strain ATCC 204508 / S288c) (Baker's yeast).